Here is a 379-residue protein sequence, read N- to C-terminus: Succinyl-diaminopimelate desuccinylase (379 aa).

His-70 lines the Zn(2+) pocket. The active site involves Asp-72. Asp-103 contributes to the Zn(2+) binding site. Glu-137 serves as the catalytic Proton acceptor. Zn(2+) is bound by residues Glu-138, Glu-166, and His-352.

It belongs to the peptidase M20A family. DapE subfamily. In terms of assembly, homodimer. The cofactor is Zn(2+). Co(2+) is required as a cofactor.

It catalyses the reaction N-succinyl-(2S,6S)-2,6-diaminopimelate + H2O = (2S,6S)-2,6-diaminopimelate + succinate. The protein operates within amino-acid biosynthesis; L-lysine biosynthesis via DAP pathway; LL-2,6-diaminopimelate from (S)-tetrahydrodipicolinate (succinylase route): step 3/3. Functionally, catalyzes the hydrolysis of N-succinyl-L,L-diaminopimelic acid (SDAP), forming succinate and LL-2,6-diaminopimelate (DAP), an intermediate involved in the bacterial biosynthesis of lysine and meso-diaminopimelic acid, an essential component of bacterial cell walls. The polypeptide is Succinyl-diaminopimelate desuccinylase (Burkholderia ambifaria (strain ATCC BAA-244 / DSM 16087 / CCUG 44356 / LMG 19182 / AMMD) (Burkholderia cepacia (strain AMMD))).